The sequence spans 98 residues: uncharacterized protein (98 aa).

This is an uncharacterized protein from Sulfolobus islandicus filamentous virus (isolate Iceland/Hveragerdi) (SIFV).